A 116-amino-acid polypeptide reads, in one-letter code: Iron-sulfur cluster insertion protein ErpA (116 aa).

Positions 44, 108, and 110 each coordinate iron-sulfur cluster.

Belongs to the HesB/IscA family. Homodimer. Iron-sulfur cluster is required as a cofactor.

In terms of biological role, required for insertion of 4Fe-4S clusters for at least IspG. The sequence is that of Iron-sulfur cluster insertion protein ErpA from Pseudomonas putida (strain ATCC 47054 / DSM 6125 / CFBP 8728 / NCIMB 11950 / KT2440).